The primary structure comprises 206 residues: Large ribosomal subunit protein uL4 (206 aa).

A disordered region spans residues 46 to 77 (GTRAQKDREQVKHSTKKPFKQKGTGRARAGMT). Basic residues predominate over residues 58-70 (HSTKKPFKQKGTG).

Belongs to the universal ribosomal protein uL4 family. In terms of assembly, part of the 50S ribosomal subunit.

Its function is as follows. One of the primary rRNA binding proteins, this protein initially binds near the 5'-end of the 23S rRNA. It is important during the early stages of 50S assembly. It makes multiple contacts with different domains of the 23S rRNA in the assembled 50S subunit and ribosome. Forms part of the polypeptide exit tunnel. This Albidiferax ferrireducens (strain ATCC BAA-621 / DSM 15236 / T118) (Rhodoferax ferrireducens) protein is Large ribosomal subunit protein uL4.